The chain runs to 410 residues: Peptidase T (410 aa).

A Zn(2+)-binding site is contributed by His77. Asp79 is a catalytic residue. A Zn(2+)-binding site is contributed by Asp140. The active-site Proton acceptor is the Glu174. 3 residues coordinate Zn(2+): Glu175, Asp197, and His379.

Belongs to the peptidase M20B family. Requires Zn(2+) as cofactor.

The protein resides in the cytoplasm. The enzyme catalyses Release of the N-terminal residue from a tripeptide.. Functionally, cleaves the N-terminal amino acid of tripeptides. In Desulfitobacterium hafniense (strain Y51), this protein is Peptidase T.